A 201-amino-acid chain; its full sequence is MSRYRRPRFKKIRRLGALPGLTSKRPKTGNDLKNQSRSGKKSQYRIRLEEKQKLRFHYGLTERQLLKYVRIAGKAKGSTGQVLLQLLEMRLDNILFRLGMASTIPQARQLVNHRHILVNGSIVDIPSYRCKPRDIITAKDEKKSRTLIQNYLDSSPPQELPKHLTLQPLQYKGLVNQIIDSKWVSLKINELLVVEYYSRQT.

The segment at 15-44 is disordered; it reads LGALPGLTSKRPKTGNDLKNQSRSGKKSQY. The 62-residue stretch at 89 to 150 folds into the S4 RNA-binding domain; sequence MRLDNILFRL…EKKSRTLIQN (62 aa).

This sequence belongs to the universal ribosomal protein uS4 family. In terms of assembly, part of the 30S ribosomal subunit. Contacts protein S5. The interaction surface between S4 and S5 is involved in control of translational fidelity.

It localises to the plastid. Its subcellular location is the chloroplast. Functionally, one of the primary rRNA binding proteins, it binds directly to 16S rRNA where it nucleates assembly of the body of the 30S subunit. Its function is as follows. With S5 and S12 plays an important role in translational accuracy. The sequence is that of Small ribosomal subunit protein uS4c (rps4) from Cucumis sativus (Cucumber).